Consider the following 299-residue polypeptide: Fructose-1,6-bisphosphatase class 1 (299 aa).

Residues E79, D98, L100, and D101 each contribute to the Mg(2+) site. Substrate is bound by residues 101–104, Y207, and K238; that span reads DGSS. E244 lines the Mg(2+) pocket.

Belongs to the FBPase class 1 family. Homotetramer. The cofactor is Mg(2+).

It is found in the cytoplasm. The enzyme catalyses beta-D-fructose 1,6-bisphosphate + H2O = beta-D-fructose 6-phosphate + phosphate. It functions in the pathway carbohydrate biosynthesis; gluconeogenesis. This chain is Fructose-1,6-bisphosphatase class 1, found in Campylobacter curvus (strain 525.92).